The sequence spans 87 residues: Small ribosomal subunit protein uS17 (87 aa).

Belongs to the universal ribosomal protein uS17 family. As to quaternary structure, part of the 30S ribosomal subunit.

One of the primary rRNA binding proteins, it binds specifically to the 5'-end of 16S ribosomal RNA. The sequence is that of Small ribosomal subunit protein uS17 from Onion yellows phytoplasma (strain OY-M).